Here is a 185-residue protein sequence, read N- to C-terminus: Elongation factor P (185 aa).

It belongs to the elongation factor P family.

It is found in the cytoplasm. Its pathway is protein biosynthesis; polypeptide chain elongation. Its function is as follows. Involved in peptide bond synthesis. Stimulates efficient translation and peptide-bond synthesis on native or reconstituted 70S ribosomes in vitro. Probably functions indirectly by altering the affinity of the ribosome for aminoacyl-tRNA, thus increasing their reactivity as acceptors for peptidyl transferase. The polypeptide is Elongation factor P (Nitrosomonas eutropha (strain DSM 101675 / C91 / Nm57)).